We begin with the raw amino-acid sequence, 790 residues long: Potassium transporter 22 (790 aa).

At 1-64 (MAQQQGQGAG…HGEGWARTLR (64 aa)) the chain is on the cytoplasmic side. Residues 65–85 (LAFQCFGVLYGDIGTSPLYVY) traverse the membrane as a helical segment. The Extracellular segment spans residues 86–98 (STTFDGGIRHTDD). A helical transmembrane segment spans residues 99–119 (LLGVLSLIIYSFLLFTIIKYV). The Cytoplasmic portion of the chain corresponds to 120 to 198 (YIALRANDDG…DLLENSRPVR (79 aa)). A helical membrane pass occupies residues 199–219 (ISLFLLTILATAMVISDACLT). At 220–236 (PAISVLSAVGGLKDKAP) the chain is on the extracellular side. The chain crosses the membrane as a helical span at residues 237 to 257 (HLNTEQVVWVTVGILVMLFAV). Residues 258-264 (QRFGTDK) lie on the Cytoplasmic side of the membrane. Residues 265 to 285 (VGYLFAPVVLLWLLLIGGVGV) form a helical membrane-spanning segment. Residues 286-318 (YNLAAHDVGVLRAFNPKYILDYFRRNGRHGWVS) are Extracellular-facing. The helical transmembrane segment at 319–339 (LGGVLLCFTGTEALFADLGCF) threads the bilayer. Residues 340-345 (SIRSIQ) are Cytoplasmic-facing. Residues 346–366 (LSFAFGLVPAVLLAYAGQAAY) form a helical membrane-spanning segment. At 367-385 (LRVYPDHVGDAFYASTPQV) the chain is on the extracellular side. A helical transmembrane segment spans residues 386–406 (LFWPTLVLALAASVVGSQAMI). Over 407–437 (SCAFATISHSQAMGCFPRVKVVHTSRQYQGQ) the chain is Cytoplasmic. The chain crosses the membrane as a helical span at residues 438-458 (VYIPEINLLLGAAACVVTVAA). The Extracellular portion of the chain corresponds to 459-469 (RDTVVIGEAHG). A helical membrane pass occupies residues 470–490 (ICVVLVMLITTLLLTVVMVLV). Residues 491–492 (WR) are Cytoplasmic-facing. Residues 493-513 (VNIGWVLVFACVFASTESVYL) traverse the membrane as a helical segment. Topologically, residues 514 to 519 (TSVLYK) are extracellular. The helical transmembrane segment at 520–540 (FAHGGYIPVAMSAVLMGVMGV) threads the bilayer. The Cytoplasmic segment spans residues 541–790 (WHYVHVRRYK…LLKVGMSYEI (250 aa)).

This sequence belongs to the HAK/KUP transporter (TC 2.A.72.3) family.

The protein resides in the membrane. High-affinity potassium transporter. This chain is Potassium transporter 22 (HAK22), found in Oryza sativa subsp. japonica (Rice).